The following is a 78-amino-acid chain: Beta-defensin 105A (78 aa).

An N-terminal signal peptide occupies residues 1-27; it reads MALIRKTFYFLFAVFFVLVQLPSECQA. 3 disulfides stabilise this stretch: cysteine 43/cysteine 74, cysteine 53/cysteine 67, and cysteine 57/cysteine 73.

The protein belongs to the beta-defensin family.

It is found in the secreted. Functionally, has antimicrobial activity. This is Beta-defensin 105A (DEFB105A) from Pongo pygmaeus (Bornean orangutan).